We begin with the raw amino-acid sequence, 89 residues long: Small ribosomal subunit protein bS20 (89 aa).

The interval 1 to 28 (MANHYSALKRARQTETRTARNRANTSRM) is disordered.

Belongs to the bacterial ribosomal protein bS20 family.

In terms of biological role, binds directly to 16S ribosomal RNA. The polypeptide is Small ribosomal subunit protein bS20 (Koribacter versatilis (strain Ellin345)).